The primary structure comprises 304 residues: Ornithine carbamoyltransferase (304 aa).

Carbamoyl phosphate is bound by residues 47–50 (STRT), R98, and 125–128 (HPCQ). L-ornithine-binding positions include N156, D221, and 225–226 (SM). Carbamoyl phosphate-binding positions include 262-263 (CL) and R290.

The protein belongs to the aspartate/ornithine carbamoyltransferase superfamily. OTCase family.

The protein localises to the cytoplasm. It catalyses the reaction carbamoyl phosphate + L-ornithine = L-citrulline + phosphate + H(+). Its pathway is amino-acid biosynthesis; L-arginine biosynthesis; L-arginine from L-ornithine and carbamoyl phosphate: step 1/3. Its function is as follows. Reversibly catalyzes the transfer of the carbamoyl group from carbamoyl phosphate (CP) to the N(epsilon) atom of ornithine (ORN) to produce L-citrulline. This Methanococcus aeolicus (strain ATCC BAA-1280 / DSM 17508 / OCM 812 / Nankai-3) protein is Ornithine carbamoyltransferase.